A 236-amino-acid polypeptide reads, in one-letter code: 1-(5-phosphoribosyl)-5-[(5-phosphoribosylamino)methylideneamino] imidazole-4-carboxamide isomerase (236 aa).

Asp8 serves as the catalytic Proton acceptor. Catalysis depends on Asp127, which acts as the Proton donor.

It belongs to the HisA/HisF family.

It is found in the cytoplasm. The catalysed reaction is 1-(5-phospho-beta-D-ribosyl)-5-[(5-phospho-beta-D-ribosylamino)methylideneamino]imidazole-4-carboxamide = 5-[(5-phospho-1-deoxy-D-ribulos-1-ylimino)methylamino]-1-(5-phospho-beta-D-ribosyl)imidazole-4-carboxamide. It functions in the pathway amino-acid biosynthesis; L-histidine biosynthesis; L-histidine from 5-phospho-alpha-D-ribose 1-diphosphate: step 4/9. In Campylobacter concisus (strain 13826), this protein is 1-(5-phosphoribosyl)-5-[(5-phosphoribosylamino)methylideneamino] imidazole-4-carboxamide isomerase.